A 618-amino-acid chain; its full sequence is Chaperone protein DnaK (618 aa).

T175 is subject to Phosphothreonine; by autocatalysis. Residues 576–618 (SQNAEPGADGGANSGANPGGTTGNTDTKDDNVVDAEYKVDDDK) form a disordered region. Over residues 583–597 (ADGGANSGANPGGTT) the composition is skewed to gly residues. Basic and acidic residues predominate over residues 601-618 (DTKDDNVVDAEYKVDDDK).

This sequence belongs to the heat shock protein 70 family.

In terms of biological role, acts as a chaperone. This is Chaperone protein DnaK from Clostridium kluyveri (strain NBRC 12016).